Consider the following 298-residue polypeptide: Inosose dehydratase 2 (298 aa).

This sequence belongs to the IolE/MocC family. The cofactor is glutathione. Co(2+) is required as a cofactor. It depends on Mn(2+) as a cofactor.

The catalysed reaction is scyllo-inosose = 3D-3,5/4-trihydroxycyclohexane-1,2-dione + H2O. Its pathway is polyol metabolism; myo-inositol degradation into acetyl-CoA; acetyl-CoA from myo-inositol: step 2/7. Catalyzes the dehydration of inosose (2-keto-myo-inositol, 2KMI or 2,4,6/3,5-pentahydroxycyclohexanone) to 3D-(3,5/4)-trihydroxycyclohexane-1,2-dione (D-2,3-diketo-4-deoxy-epi-inositol). The protein is Inosose dehydratase 2 of Bacillus cereus (strain ZK / E33L).